A 177-amino-acid chain; its full sequence is Peptidyl-tRNA hydrolase (177 aa).

Y14 serves as a coordination point for tRNA. H19 functions as the Proton acceptor in the catalytic mechanism. The tRNA site is built by F64, N66, and N112.

This sequence belongs to the PTH family. In terms of assembly, monomer.

Its subcellular location is the cytoplasm. It carries out the reaction an N-acyl-L-alpha-aminoacyl-tRNA + H2O = an N-acyl-L-amino acid + a tRNA + H(+). Hydrolyzes ribosome-free peptidyl-tRNAs (with 1 or more amino acids incorporated), which drop off the ribosome during protein synthesis, or as a result of ribosome stalling. In terms of biological role, catalyzes the release of premature peptidyl moieties from peptidyl-tRNA molecules trapped in stalled 50S ribosomal subunits, and thus maintains levels of free tRNAs and 50S ribosomes. This is Peptidyl-tRNA hydrolase from Latilactobacillus sakei (Lactobacillus sakei).